We begin with the raw amino-acid sequence, 328 residues long: Carbonic anhydrase-related protein 11 (328 aa).

Residues 1–22 (MGAAARLSAPRALVLWAALGAA) form the signal peptide. An Alpha-carbonic anhydrase domain is found at 33–303 (DWWSYKDNLQ…LAHRALRGNR (271 aa)). N-linked (GlcNAc...) asparagine glycosylation is found at Asn-118, Asn-170, and Asn-260. A disordered region spans residues 300–328 (RGNRDPRHPERRCRGPNYRLHVDGAPHGR). Positions 319 to 328 (LHVDGAPHGR) are enriched in basic and acidic residues.

The protein belongs to the alpha-carbonic anhydrase family.

It is found in the secreted. Its function is as follows. Does not have a catalytic activity. This chain is Carbonic anhydrase-related protein 11 (CA11), found in Bos taurus (Bovine).